Here is a 137-residue protein sequence, read N- to C-terminus: MSSIIRKVISTSKAPAAIGAYSQAVLVDRTIYVSGQIGMDPSSGQLVPGGVAEEAKQALKNLGEILKAAGCDFTNVVKTTVLLADINDFGTVNEIYKTYFQGNLPARAAYQVAALPKGSRIEIEAIAVQGPFTTAGL.

Ser2 is modified (N-acetylserine). N6-succinyllysine occurs at positions 13, 60, and 67. Thr74 bears the Phosphothreonine mark.

The protein belongs to the RutC family. Homotrimer. Interacts with YTHDF2. Liver and kidney.

The protein localises to the cytoplasm. Its subcellular location is the nucleus. The protein resides in the peroxisome. It localises to the mitochondrion. The enzyme catalyses 2-iminobutanoate + H2O = 2-oxobutanoate + NH4(+). The catalysed reaction is 2-iminopropanoate + H2O = pyruvate + NH4(+). Functionally, catalyzes the hydrolytic deamination of enamine/imine intermediates that form during the course of normal metabolism. May facilitate the release of ammonia from these potentially toxic reactive metabolites, reducing their impact on cellular components. It may act on enamine/imine intermediates formed by several types of pyridoxal-5'-phosphate-dependent dehydratases including L-threonine dehydratase. Its function is as follows. Also promotes endoribonucleolytic cleavage of some transcripts by promoting recruitment of the ribonuclease P/MRP complex. Acts by bridging YTHDF2 and the ribonuclease P/MRP complex. RIDA/HRSP12 binds to N6-methyladenosine (m6A)-containing mRNAs containing a 5'-GGUUC-3' motif: cooperative binding of RIDA/HRSP12 and YTHDF2 to such transcripts lead to recruitment of the ribonuclease P/MRP complex and subsequent endoribonucleolytic cleavage. This chain is 2-iminobutanoate/2-iminopropanoate deaminase, found in Rattus norvegicus (Rat).